Reading from the N-terminus, the 184-residue chain is Nucleoside triphosphate pyrophosphatase (184 aa).

Aspartate 71 serves as the catalytic Proton acceptor.

It belongs to the Maf family. The cofactor is a divalent metal cation.

It is found in the cytoplasm. It carries out the reaction a ribonucleoside 5'-triphosphate + H2O = a ribonucleoside 5'-phosphate + diphosphate + H(+). The catalysed reaction is a 2'-deoxyribonucleoside 5'-triphosphate + H2O = a 2'-deoxyribonucleoside 5'-phosphate + diphosphate + H(+). Its function is as follows. Nucleoside triphosphate pyrophosphatase. May have a dual role in cell division arrest and in preventing the incorporation of modified nucleotides into cellular nucleic acids. The sequence is that of Nucleoside triphosphate pyrophosphatase from Synechococcus sp. (strain CC9605).